A 311-amino-acid polypeptide reads, in one-letter code: Methionyl-tRNA formyltransferase (311 aa).

Residue 112–115 participates in (6S)-5,6,7,8-tetrahydrofolate binding; the sequence is SLLP.

This sequence belongs to the Fmt family.

It carries out the reaction L-methionyl-tRNA(fMet) + (6R)-10-formyltetrahydrofolate = N-formyl-L-methionyl-tRNA(fMet) + (6S)-5,6,7,8-tetrahydrofolate + H(+). In terms of biological role, attaches a formyl group to the free amino group of methionyl-tRNA(fMet). The formyl group appears to play a dual role in the initiator identity of N-formylmethionyl-tRNA by promoting its recognition by IF2 and preventing the misappropriation of this tRNA by the elongation apparatus. The polypeptide is Methionyl-tRNA formyltransferase (Geobacter metallireducens (strain ATCC 53774 / DSM 7210 / GS-15)).